The chain runs to 573 residues: NEDD4-binding protein 3-A (573 aa).

Disordered regions lie at residues 168 to 216 and 382 to 407; these read LNTM…INSL and LRGE…EDSK. Composition is skewed to polar residues over residues 184–196 and 207–216; these read QPSN…QSES and DSRQNSINSL. The stretch at 289-539 forms a coiled coil; the sequence is VEDVARQLEE…KEIQSSYREM (251 aa).

This sequence belongs to the N4BP3 family.

It localises to the cytoplasmic vesicle. Its subcellular location is the cell projection. The protein resides in the axon. The protein localises to the dendrite. In terms of biological role, plays a role in axon and dendrite arborization during cranial nerve development. Also important for neural crest migration and early development of other anterior structures including eye, brain and cranial cartilage. This chain is NEDD4-binding protein 3-A, found in Xenopus laevis (African clawed frog).